A 304-amino-acid chain; its full sequence is Porphobilinogen deaminase (304 aa).

At Cys-240 the chain carries S-(dipyrrolylmethanemethyl)cysteine.

This sequence belongs to the HMBS family. In terms of assembly, monomer. The cofactor is dipyrromethane.

It carries out the reaction 4 porphobilinogen + H2O = hydroxymethylbilane + 4 NH4(+). Its pathway is porphyrin-containing compound metabolism; protoporphyrin-IX biosynthesis; coproporphyrinogen-III from 5-aminolevulinate: step 2/4. Tetrapolymerization of the monopyrrole PBG into the hydroxymethylbilane pre-uroporphyrinogen in several discrete steps. The chain is Porphobilinogen deaminase from Xanthomonas euvesicatoria pv. vesicatoria (strain 85-10) (Xanthomonas campestris pv. vesicatoria).